The chain runs to 258 residues: Thiazole synthase (258 aa).

Catalysis depends on Lys-98, which acts as the Schiff-base intermediate with DXP. Residues Gly-159, 185–186 (AG), and 207–208 (NT) each bind 1-deoxy-D-xylulose 5-phosphate.

This sequence belongs to the ThiG family. Homotetramer. Forms heterodimers with either ThiH or ThiS.

The protein resides in the cytoplasm. It carries out the reaction [ThiS sulfur-carrier protein]-C-terminal-Gly-aminoethanethioate + 2-iminoacetate + 1-deoxy-D-xylulose 5-phosphate = [ThiS sulfur-carrier protein]-C-terminal Gly-Gly + 2-[(2R,5Z)-2-carboxy-4-methylthiazol-5(2H)-ylidene]ethyl phosphate + 2 H2O + H(+). It functions in the pathway cofactor biosynthesis; thiamine diphosphate biosynthesis. Its function is as follows. Catalyzes the rearrangement of 1-deoxy-D-xylulose 5-phosphate (DXP) to produce the thiazole phosphate moiety of thiamine. Sulfur is provided by the thiocarboxylate moiety of the carrier protein ThiS. In vitro, sulfur can be provided by H(2)S. This chain is Thiazole synthase, found in Bacillus cereus (strain ZK / E33L).